The primary structure comprises 282 residues: ATP synthase gamma chain (282 aa).

The protein belongs to the ATPase gamma chain family. F-type ATPases have 2 components, CF(1) - the catalytic core - and CF(0) - the membrane proton channel. CF(1) has five subunits: alpha(3), beta(3), gamma(1), delta(1), epsilon(1). CF(0) has three main subunits: a, b and c.

The protein resides in the cell membrane. Its function is as follows. Produces ATP from ADP in the presence of a proton gradient across the membrane. The gamma chain is believed to be important in regulating ATPase activity and the flow of protons through the CF(0) complex. The chain is ATP synthase gamma chain from Clostridium acetobutylicum (strain ATCC 824 / DSM 792 / JCM 1419 / IAM 19013 / LMG 5710 / NBRC 13948 / NRRL B-527 / VKM B-1787 / 2291 / W).